The following is a 96-amino-acid chain: Large ribosomal subunit protein uL23 (96 aa).

This sequence belongs to the universal ribosomal protein uL23 family. Part of the 50S ribosomal subunit. Contacts protein L29, and trigger factor when it is bound to the ribosome.

Its function is as follows. One of the early assembly proteins it binds 23S rRNA. One of the proteins that surrounds the polypeptide exit tunnel on the outside of the ribosome. Forms the main docking site for trigger factor binding to the ribosome. This chain is Large ribosomal subunit protein uL23, found in Clostridioides difficile (strain 630) (Peptoclostridium difficile).